The chain runs to 530 residues: uncharacterized protein (530 aa).

5 helical membrane-spanning segments follow: residues 4–23 (FLAANPLIALAVILAVGLAI), 28–47 (LFGVSLGAAAVLIVALVVST), 57–79 (FVFQLGLAMFVYVIGISAGPAFF), 91–113 (LFMITLLVSLTALAWVLIRAFGL), and 148–170 (VIGYSLAYPGAVLGSILVAAVGA). The RCK C-terminal domain maps to 260-344 (LGGECDTKIE…MGEVRRFLGD (85 aa)). A run of 4 helical transmembrane segments spans residues 352 to 374 (VNLLPFAIGLSLGLLLGAIPVPL), 379 to 398 (TMYLGFGGGPIVAGLILGAL), 419 to 441 (LGLALFLAGVGTSAGAGFRQALT), and 451 to 473 (VGFAITVTSALVCAVVGMWLLKL).

The protein belongs to the AAE transporter (TC 2.A.81) family.

Its subcellular location is the cell membrane. This is an uncharacterized protein from Corynebacterium efficiens (strain DSM 44549 / YS-314 / AJ 12310 / JCM 11189 / NBRC 100395).